A 243-amino-acid chain; its full sequence is UDP-2,3-diacylglucosamine hydrolase (243 aa).

Mn(2+)-binding residues include aspartate 9, histidine 11, aspartate 42, asparagine 79, and histidine 114. Substrate is bound at residue 79 to 80 (NR). Substrate-binding residues include aspartate 122, serine 160, asparagine 164, and histidine 195. The Mn(2+) site is built by histidine 195 and histidine 197.

This sequence belongs to the LpxH family. Mn(2+) is required as a cofactor.

Its subcellular location is the cell inner membrane. The catalysed reaction is UDP-2-N,3-O-bis[(3R)-3-hydroxytetradecanoyl]-alpha-D-glucosamine + H2O = 2-N,3-O-bis[(3R)-3-hydroxytetradecanoyl]-alpha-D-glucosaminyl 1-phosphate + UMP + 2 H(+). It participates in glycolipid biosynthesis; lipid IV(A) biosynthesis; lipid IV(A) from (3R)-3-hydroxytetradecanoyl-[acyl-carrier-protein] and UDP-N-acetyl-alpha-D-glucosamine: step 4/6. Its function is as follows. Hydrolyzes the pyrophosphate bond of UDP-2,3-diacylglucosamine to yield 2,3-diacylglucosamine 1-phosphate (lipid X) and UMP by catalyzing the attack of water at the alpha-P atom. Involved in the biosynthesis of lipid A, a phosphorylated glycolipid that anchors the lipopolysaccharide to the outer membrane of the cell. The protein is UDP-2,3-diacylglucosamine hydrolase of Coxiella burnetii (strain RSA 331 / Henzerling II).